The primary structure comprises 310 residues: Ribosomal RNA small subunit methyltransferase H (310 aa).

Residues 33-35 (AGH), Asp53, Phe79, Asp100, and Gln107 each bind S-adenosyl-L-methionine.

Belongs to the methyltransferase superfamily. RsmH family.

The protein resides in the cytoplasm. The catalysed reaction is cytidine(1402) in 16S rRNA + S-adenosyl-L-methionine = N(4)-methylcytidine(1402) in 16S rRNA + S-adenosyl-L-homocysteine + H(+). Functionally, specifically methylates the N4 position of cytidine in position 1402 (C1402) of 16S rRNA. The protein is Ribosomal RNA small subunit methyltransferase H of Clostridium tetani (strain Massachusetts / E88).